Consider the following 652-residue polypeptide: Na(+)/H(+) antiporter NhaA 3 (652 aa).

The interval 1-428 (MTGEIPRGRR…GASLTTWLVF (428 aa)) is na(+)/H(+) antiporter NhaA. The next 11 membrane-spanning stretches (helical) occupy residues 32-52 (ETGS…WVNL), 78-98 (LRFW…GLEV), 114-134 (MLPL…YLAF), 142-162 (VGWG…LAVL), 173-193 (FLLT…AIAY), 200-220 (MALF…AAGV), 227-249 (LLLG…VVGL), 306-326 (HPWA…GVVV), 342-362 (GVLF…SMLV), 376-396 (WAAI…ALLI), and 411-431 (VGIL…FRLA). The 195-residue stretch at 429–623 (RLAARLAPAR…LSAAVMSAFA (195 aa)) folds into the Thioredoxin domain. The interval 626–652 (RLRPEGGREPDHRSEAGSEQPDEEPGT) is disordered. Residues 627-641 (LRPEGGREPDHRSEA) show a composition bias toward basic and acidic residues.

It in the N-terminal section; belongs to the NhaA Na(+)/H(+) (TC 2.A.33) antiporter family.

It localises to the cell membrane. The enzyme catalyses Na(+)(in) + 2 H(+)(out) = Na(+)(out) + 2 H(+)(in). Na(+)/H(+) antiporter that extrudes sodium in exchange for external protons. The sequence is that of Na(+)/H(+) antiporter NhaA 3 from Salinispora tropica (strain ATCC BAA-916 / DSM 44818 / JCM 13857 / NBRC 105044 / CNB-440).